Consider the following 173-residue polypeptide: CASP-like protein 3A1 (173 aa).

Met1 is a topological domain (cytoplasmic). The chain crosses the membrane as a helical span at residues 2-22 (VDIALRSAVVAFMVVSLSAMF). Over 23–48 (TSTQHSEVHIIGFSIPVSLRWNRSQP) the chain is Extracellular. Residue Asn44 is glycosylated (N-linked (GlcNAc...) asparagine). Residues 49–69 (FEFLVVVELLICAYAFVQFVY) traverse the membrane as a helical segment. The Cytoplasmic portion of the chain corresponds to 70 to 84 (QSVVLAKNAVPTRRC). The chain crosses the membrane as a helical span at residues 85-105 (IWVQLAADQVCAYLVLAAAAA). Over 106–140 (AAGASRTNKSGFQSLGMQNIKVPGVCIVLDKFCNR) the chain is Extracellular. Asn113 carries N-linked (GlcNAc...) asparagine glycosylation. A helical transmembrane segment spans residues 141–161 (ATIAIIFTLLAAGASGISVTL). The Cytoplasmic portion of the chain corresponds to 162 to 173 (DVYMLTLTYYMG).

Belongs to the Casparian strip membrane proteins (CASP) family. As to quaternary structure, homodimer and heterodimers.

It is found in the cell membrane. The protein is CASP-like protein 3A1 of Pteridium aquilinum subsp. aquilinum (Bracken fern).